The sequence spans 102 residues: Large ribosomal subunit protein bL21 (102 aa).

This sequence belongs to the bacterial ribosomal protein bL21 family. As to quaternary structure, part of the 50S ribosomal subunit. Contacts protein L20.

Its function is as follows. This protein binds to 23S rRNA in the presence of protein L20. The polypeptide is Large ribosomal subunit protein bL21 (Desulfovibrio desulfuricans (strain ATCC 27774 / DSM 6949 / MB)).